The primary structure comprises 629 residues: tRNA uridine 5-carboxymethylaminomethyl modification enzyme MnmG (629 aa).

13-18 is an FAD binding site; the sequence is GGGHAG. 273 to 287 contributes to the NAD(+) binding site; that stretch reads GPRYCPSIEDKVMRF.

Belongs to the MnmG family. As to quaternary structure, homodimer. Heterotetramer of two MnmE and two MnmG subunits. The cofactor is FAD.

Its subcellular location is the cytoplasm. Functionally, NAD-binding protein involved in the addition of a carboxymethylaminomethyl (cmnm) group at the wobble position (U34) of certain tRNAs, forming tRNA-cmnm(5)s(2)U34. This is tRNA uridine 5-carboxymethylaminomethyl modification enzyme MnmG from Photorhabdus laumondii subsp. laumondii (strain DSM 15139 / CIP 105565 / TT01) (Photorhabdus luminescens subsp. laumondii).